A 581-amino-acid chain; its full sequence is NADH-quinone oxidoreductase subunit C/D (581 aa).

The segment at M1 to F172 is NADH dehydrogenase I subunit C. Positions E196–R581 are NADH dehydrogenase I subunit D.

It in the N-terminal section; belongs to the complex I 30 kDa subunit family. The protein in the C-terminal section; belongs to the complex I 49 kDa subunit family. As to quaternary structure, NDH-1 is composed of 13 different subunits. Subunits NuoB, CD, E, F, and G constitute the peripheral sector of the complex.

It is found in the cell inner membrane. The catalysed reaction is a quinone + NADH + 5 H(+)(in) = a quinol + NAD(+) + 4 H(+)(out). Its function is as follows. NDH-1 shuttles electrons from NADH, via FMN and iron-sulfur (Fe-S) centers, to quinones in the respiratory chain. The immediate electron acceptor for the enzyme in this species is believed to be ubiquinone. Couples the redox reaction to proton translocation (for every two electrons transferred, four hydrogen ions are translocated across the cytoplasmic membrane), and thus conserves the redox energy in a proton gradient. In Rhodopseudomonas palustris (strain TIE-1), this protein is NADH-quinone oxidoreductase subunit C/D.